The following is a 338-amino-acid chain: 1-aminocyclopropane-1-carboxylate deaminase (338 aa).

At lysine 51 the chain carries N6-(pyridoxal phosphate)lysine. Serine 78 functions as the Nucleophile in the catalytic mechanism.

The protein belongs to the ACC deaminase/D-cysteine desulfhydrase family. Homotrimer. Pyridoxal 5'-phosphate serves as cofactor.

The enzyme catalyses 1-aminocyclopropane-1-carboxylate + H2O = 2-oxobutanoate + NH4(+). Catalyzes a cyclopropane ring-opening reaction, the irreversible conversion of 1-aminocyclopropane-1-carboxylate (ACC) to ammonia and alpha-ketobutyrate. Allows growth on ACC as a nitrogen source. The polypeptide is 1-aminocyclopropane-1-carboxylate deaminase (Burkholderia vietnamiensis (strain G4 / LMG 22486) (Burkholderia cepacia (strain R1808))).